The sequence spans 50 residues: Large ribosomal subunit protein bL33 (50 aa).

Belongs to the bacterial ribosomal protein bL33 family.

This is Large ribosomal subunit protein bL33 (rpmG) from Aquifex aeolicus (strain VF5).